Consider the following 496-residue polypeptide: NADH-quinone oxidoreductase subunit N (496 aa).

14 consecutive transmembrane segments (helical) span residues 12–32, 43–63, 79–99, 108–128, 132–152, 166–186, 207–227, 257–277, 280–300, 306–326, 333–353, 383–403, 416–436, and 464–484; these read LNLITLAPMLVAIAGGLIILI, SLYVMLTILILVIDFGATLGL, VSIVSQLLIIVASILFTPLAL, SYPEFFALFLFMVAGFQFMVA, LILIFVGLETASLSLYTLIAL, FTMGALAAAFFAMGSAVIYAL, GLMIAIFGSSVLLLVAFAFKL, VAAFVVSIRIFGMYIDLGVEW, VVILVLAVLTMTLANLMALVQ, MLAYSSISHAGFIIAALALDT, IFFYYGLFMFTNLGAFAMLWM, AVIMAIFMLSLAGVPPFSIFW, GYVWLAIVMGLNSAIAAYYYL, and AVVGFAAVATIAAIFYVQPLV.

Belongs to the complex I subunit 2 family. In terms of assembly, NDH-1 is composed of 14 different subunits. Subunits NuoA, H, J, K, L, M, N constitute the membrane sector of the complex.

Its subcellular location is the cell inner membrane. The enzyme catalyses a quinone + NADH + 5 H(+)(in) = a quinol + NAD(+) + 4 H(+)(out). Functionally, NDH-1 shuttles electrons from NADH, via FMN and iron-sulfur (Fe-S) centers, to quinones in the respiratory chain. The immediate electron acceptor for the enzyme in this species is believed to be ubiquinone. Couples the redox reaction to proton translocation (for every two electrons transferred, four hydrogen ions are translocated across the cytoplasmic membrane), and thus conserves the redox energy in a proton gradient. This Sulfurovum sp. (strain NBC37-1) protein is NADH-quinone oxidoreductase subunit N.